The primary structure comprises 243 residues: Carboxy-S-adenosyl-L-methionine synthase (243 aa).

Residues Y40, 65–67 (GCS), 90–91 (DN), 118–119 (DI), N133, and R200 each bind S-adenosyl-L-methionine.

Belongs to the class I-like SAM-binding methyltransferase superfamily. Cx-SAM synthase family. As to quaternary structure, homodimer.

It catalyses the reaction prephenate + S-adenosyl-L-methionine = carboxy-S-adenosyl-L-methionine + 3-phenylpyruvate + H2O. Its function is as follows. Catalyzes the conversion of S-adenosyl-L-methionine (SAM) to carboxy-S-adenosyl-L-methionine (Cx-SAM). In Shewanella baltica (strain OS223), this protein is Carboxy-S-adenosyl-L-methionine synthase.